Here is a 151-residue protein sequence, read N- to C-terminus: UPF0756 membrane protein Aflv_0503 (151 aa).

Transmembrane regions (helical) follow at residues 4-24 (FIFL…SLII), 52-72 (LGVT…KIGF), 85-105 (WIAM…VALL), and 115-135 (LVLG…GPLI).

This sequence belongs to the UPF0756 family.

Its subcellular location is the cell membrane. The chain is UPF0756 membrane protein Aflv_0503 from Anoxybacillus flavithermus (strain DSM 21510 / WK1).